The following is an 897-amino-acid chain: Protein translocase subunit SecA (897 aa).

ATP-binding positions include Gln87, 105–109, and Asp512; that span reads GEGKT. The tract at residues 846-897 is disordered; the sequence is EEEQQKQARKKMVFNLVDEDETSEPSKSKKLAGRNEPCPCGSGKKYKKCCGK. Zn(2+) is bound by residues Cys883, Cys885, Cys894, and Cys895.

It belongs to the SecA family. Monomer and homodimer. Part of the essential Sec protein translocation apparatus which comprises SecA, SecYEG and auxiliary proteins SecDF-YajC and YidC. Zn(2+) serves as cofactor.

It is found in the cell inner membrane. The protein resides in the cytoplasm. It carries out the reaction ATP + H2O + cellular proteinSide 1 = ADP + phosphate + cellular proteinSide 2.. In terms of biological role, part of the Sec protein translocase complex. Interacts with the SecYEG preprotein conducting channel. Has a central role in coupling the hydrolysis of ATP to the transfer of proteins into and across the cell membrane, serving as an ATP-driven molecular motor driving the stepwise translocation of polypeptide chains across the membrane. The protein is Protein translocase subunit SecA of Geobacter sulfurreducens (strain ATCC 51573 / DSM 12127 / PCA).